The sequence spans 316 residues: Arabinooligosaccharides transport system permease protein AraP (316 aa).

7 helical membrane passes run 32–52, 94–114, 128–148, 178–198, 224–244, 254–274, and 283–303; these read VVPY…SFYP, TYMI…AVLL, ALFL…RLMF, MFLM…LYFL, FYVT…ISVI, FVFW…GYLY, and MGFG…ISIT. The 216-residue stretch at 89-304 folds into the ABC transmembrane type-1 domain; that stretch reads LQNTTTYMIL…LIIFVISITQ (216 aa).

Belongs to the binding-protein-dependent transport system permease family. MalFG subfamily. In terms of assembly, the complex is composed of two ATP-binding proteins (MsmX), two transmembrane proteins (AraP and AraQ) and a solute-binding protein (AraN).

It is found in the cell membrane. In terms of biological role, part of the ABC transporter complex AraNPQ involved in the uptake of arabinooligosaccharides. Responsible for the translocation of the substrate across the membrane. This Halalkalibacterium halodurans (strain ATCC BAA-125 / DSM 18197 / FERM 7344 / JCM 9153 / C-125) (Bacillus halodurans) protein is Arabinooligosaccharides transport system permease protein AraP (araP).